The following is a 728-amino-acid chain: Dynamin-like protein 1 (728 aa).

The segment at 1 to 119 (MKELFQKIWQ…ILQEKVQSID (119 aa)) is assembly domain, required for tetramerization. The Dynamin-type G domain maps to 159 to 442 (QNLEFNIAIT…LYAGEKSKIA (284 aa)). The G1 motif stretch occupies residues 169 to 176 (GVMNAGKS). Residue 171–177 (MNAGKSS) coordinates GDP. Residues 195–196 (ET) are G2 motif. The G3 motif stretch occupies residues 298-301 (DTPG). A G4 motif region spans residues 358–361 (TKAD). GDP is bound at residue Lys359. Residue Glu388 is a region of interest, G5 motif. 400–402 (SAK) contacts GDP. The tract at residues 470–695 (ENKQGVSEEN…LESLEKVLQS (226 aa)) is required for liposome binding but not for tetramerization.

The protein belongs to the TRAFAC class dynamin-like GTPase superfamily. Dynamin/Fzo/YdjA family. As to quaternary structure, forms a 2:2 heterotetramer with DLP1. DLP2 forms a central back-to-back dimer flanked on each side by a DLP1 subunit. In the crystal structures the 2 DLP1 subunits are in very different conformations.

The protein resides in the cytoplasm. It is found in the cytosol. It catalyses the reaction GTP + H2O = GDP + phosphate + H(+). In terms of biological role, the heterotetrameric DLP1(2)-DLP2(2) complex tethers liposomes and may mediate their fusion. Initial binding is probably mediated by DLP1, while DLP2 couples DLP1 subunits and increases the effective reach of the complex up to 45 nm. The role of the nucleotide is unknown. This subunit alone weakly binds to liposomes; GTP, GDP, GMPPCP and GMPPNP do not change heterotetramer binding. Tetramerization is required for GTPase activity, suggesting the GTPase domains (dynamin-type G) from DLP1 and DLP2 must dimerize to reconstitute the GTPase active site. The chain is Dynamin-like protein 1 from Campylobacter jejuni subsp. jejuni serotype O:23/36 (strain 81-176).